We begin with the raw amino-acid sequence, 761 residues long: Translation initiation factor IF-2 (761 aa).

The disordered stretch occupies residues 39–179 (DEETLNKAKQ…KVNHQQMPLP (141 aa)). Positions 45–105 (KAKQAGKPAA…NNQQSQSQGQ (61 aa)) are enriched in low complexity. Residues 106–120 (TKRPSQASNNQSGAA) are compositionally biased toward polar residues. A compositionally biased stretch (low complexity) spans 142 to 154 (PGSNNRRPGNNQN). Positions 155-168 (RRNHGNRGGKRRPQ) are enriched in basic residues. The region spanning 262-435 (ERPPVVTIMG…EVEEFKANPD (174 aa)) is the tr-type G domain. Residues 271–278 (GHVDHGKT) are G1. Position 271–278 (271–278 (GHVDHGKT)) interacts with GTP. The interval 296 to 300 (GITQH) is G2. Residues 317–320 (DTPG) form a G3 region. Residues 317–321 (DTPGH) and 371–374 (NKID) each bind GTP. Residues 371–374 (NKID) are G4. The tract at residues 407–409 (SAL) is G5.

This sequence belongs to the TRAFAC class translation factor GTPase superfamily. Classic translation factor GTPase family. IF-2 subfamily.

The protein resides in the cytoplasm. One of the essential components for the initiation of protein synthesis. Protects formylmethionyl-tRNA from spontaneous hydrolysis and promotes its binding to the 30S ribosomal subunits. Also involved in the hydrolysis of GTP during the formation of the 70S ribosomal complex. The sequence is that of Translation initiation factor IF-2 from Shouchella clausii (strain KSM-K16) (Alkalihalobacillus clausii).